Consider the following 34-residue polypeptide: Delta-theraphotoxin-Hm1b (34 aa).

Intrachain disulfides connect cysteine 2/cysteine 16, cysteine 9/cysteine 21, and cysteine 15/cysteine 28. Phenylalanine 34 bears the Phenylalanine amide mark.

This sequence belongs to the neurotoxin 10 (Hwtx-1) family. 09 (HaTx) subfamily. In terms of tissue distribution, expressed by the venom gland.

The protein resides in the secreted. Gating-modifier toxin that potently and selectively acts on Nav1.1/SCN1A and Nav1.3/SCN3A. It enhances hNav1.1/SCN1A currents and delays fast inactivation of the channel (EC(50)=11.6 nM), leading to a sustained current. Similar effects are observed at Nav1.3/SCN3A (EC(50)=11.8 nM), but with less sustained currents. When tested on Nav1.2/SCN2A, the native toxin decreases the peak current by 50% at saturating concentration, whereas the recombinant toxin only shows a weak decrease of peak current. The native toxin specifically activates the voltage-gated sodium channel Nav1.1/SCN1A in somatosensory neurons to elicit acute pain and mechanical allodynia. When tested on Nav1.1/SCN1A, the toxin induces a hyperpolarising shift of the voltage-dependence of steady-state activation, and induces a depolarizing shift in the voltage dependence of inactivation. In addition, it does not modify the recovery from fast inactivation in Nav1.1/SCN1A. The toxin hydrophobic face probably interacts with the domain IV voltage-sensor of Nav1.1/SCN1A and Nav1.3/SCN3A and may trap the voltage-sensing S4 helix in a partially activated state. In vivo, intracerebroventricular injection into mice elicits convulsions, spasms, tremors and rapid death. When injected into mouse hindpaw, the toxin elicits an immediate and robust response to pain. However, intraplantar injection of toxin does not cause neurogenic inflammation or alter sensitivity to heat, indicative of a modality-specific effect on mechanosensitive neurons. The chain is Delta-theraphotoxin-Hm1b from Heteroscodra maculata (Togo starburst tarantula).